The sequence spans 133 residues: Complexin-1 (133 aa).

2 disordered regions span residues 1–40 (MDFV…RLEA) and 85–112 (AMEA…DEEE). The span at 15–40 (DMGKMLGGDEEKDPDAEKKEEERLEA) shows a compositional bias: basic and acidic residues. Residues 28-60 (PDAEKKEEERLEALRQAEEERAGKYAKMEAERE) are a coiled coil.

The protein belongs to the complexin/synaphin family. As to quaternary structure, binds to the SNARE core complex containing SNAP25, VAMP2 and syntaxin-1. Nervous system. Present in electric organ (at protein level).

The protein resides in the cytoplasm. It localises to the cytosol. Its function is as follows. Positively regulates a late step in synaptic vesicle exocytosis. In Narke japonica (Japanese sleeper ray), this protein is Complexin-1.